The chain runs to 149 residues: Calmodulin-2 (149 aa).

Alanine 2 is modified (N-acetylalanine). 4 consecutive EF-hand domains span residues glutamate 8–asparagine 43, proline 44–aspartate 79, aspartate 81–lysine 116, and leucine 117–lysine 149. Residues aspartate 21, aspartate 23, asparagine 25, asparagine 27, glutamate 32, aspartate 57, aspartate 59, asparagine 61, threonine 63, glutamate 68, aspartate 94, aspartate 96, asparagine 98, and glutamate 105 each contribute to the Ca(2+) site. Lysine 116 carries the post-translational modification N6,N6,N6-trimethyllysine. Ca(2+) contacts are provided by aspartate 130, aspartate 132, aspartate 134, glutamine 136, and glutamate 141.

Belongs to the calmodulin family.

In terms of biological role, calmodulin mediates the control of a large number of enzymes, ion channels and other proteins by Ca(2+). Among the enzymes to be stimulated by the calmodulin-Ca(2+) complex are a number of protein kinases and phosphatases. The chain is Calmodulin-2 (CAM2) from Branchiostoma floridae (Florida lancelet).